A 113-amino-acid chain; its full sequence is Large ribosomal subunit protein uL24 (113 aa).

It belongs to the universal ribosomal protein uL24 family. In terms of assembly, part of the 50S ribosomal subunit.

Functionally, one of two assembly initiator proteins, it binds directly to the 5'-end of the 23S rRNA, where it nucleates assembly of the 50S subunit. In terms of biological role, one of the proteins that surrounds the polypeptide exit tunnel on the outside of the subunit. This chain is Large ribosomal subunit protein uL24, found in Rickettsia typhi (strain ATCC VR-144 / Wilmington).